A 54-amino-acid chain; its full sequence is MAVQKNKPTRSKRGMRRSHDSLTAPHLSIDKFSGETHIRHHITNNGYYKGKKVI.

Residues 1–26 (MAVQKNKPTRSKRGMRRSHDSLTAPH) form a disordered region. Positions 7 to 16 (KPTRSKRGMR) are enriched in basic residues.

It belongs to the bacterial ribosomal protein bL32 family.

The protein is Large ribosomal subunit protein bL32 of Buchnera aphidicola subsp. Acyrthosiphon pisum (strain 5A).